The sequence spans 491 residues: Delayed-rectifier potassium channel regulatory subunit KCNS3 (491 aa).

The Cytoplasmic portion of the chain corresponds to 1–182 (MVFGEFFHRP…IRMENPAYCL (182 aa)). Residues 183 to 204 (SAKLIAISSLSVVLASIVAMCV) form a helical membrane-spanning segment. Over 205–220 (HSMSEFQNEDGEVDDP) the chain is Extracellular. Residues 221–243 (VLEGVEIACIAWFTGELAIRLVA) form a helical membrane-spanning segment. Residues 244 to 254 (APSQKKFWKNP) lie on the Cytoplasmic side of the membrane. Residues 255 to 275 (LNIIDFVSIIPFYATLAVDTK) form a helical membrane-spanning segment. The Extracellular segment spans residues 276 to 285 (EEESEDIENM). Residues 286 to 306 (GKVVQILRLMRIFRILKLARH) traverse the membrane as a helical; Voltage-sensor segment. The Cytoplasmic portion of the chain corresponds to 307 to 321 (SVGLRSLGATLRHSY). Residues 322–343 (HEVGLLLLFLSVGISIFSVLIY) traverse the membrane as a helical segment. The Extracellular portion of the chain corresponds to 344–357 (SVEKDELASSLTSI). The helical intramembrane region spans 358 to 369 (PICWWWATISMT). The short motif at 370–375 (TVGYGD) is the Selectivity filter element. An intramembrane segment occupies 370–377 (TVGYGDTH). Over 378–384 (PVTLAGK) the chain is Extracellular. Residues 385–413 (IIASTCIICGILVVALPITIIFNKFSKYY) form a helical membrane-spanning segment. Topologically, residues 414 to 491 (QKQKDMDVDQ…TASLENCTAK (78 aa)) are cytoplasmic.

Belongs to the potassium channel family. S (TC 1.A.1.2) subfamily. Kv9.3/KCNS3 sub-subfamily. In terms of assembly, heterotetramer with KCNB1. Does not form homomultimers. Expressed in myocytes. Detected in lung, spleen, brain and heart.

Its subcellular location is the cell membrane. Its function is as follows. Potassium channel regulatory subunit that modulates the delayed rectifier potassium channel activity of KCNB1 by namely slowing down the deactivation and inactivation time constants. While it does not form functional channel on its own, it can form functional heterotetrameric channels with KCNB1. The chain is Delayed-rectifier potassium channel regulatory subunit KCNS3 from Rattus norvegicus (Rat).